Reading from the N-terminus, the 23-residue chain is Paralytic peptide 1 (23 aa).

The cysteines at positions 7 and 19 are disulfide-linked.

Belongs to the GBP/PSP1/paralytic peptide family. Hemolymph.

Functionally, causes rapid, rigid paralysis when injected into Lepidopteran larvae. The physiological role may be to reduce hemolymph loss following injury and promote wound healing. This chain is Paralytic peptide 1, found in Manduca sexta (Tobacco hawkmoth).